Reading from the N-terminus, the 560-residue chain is Phosphoglucomutase 1 (560 aa).

Residues arginine 24 and serine 116 each coordinate alpha-D-glucose 1,6-bisphosphate. The active-site Phosphoserine intermediate is the serine 116. Positions 116, 288, 290, and 292 each coordinate Mg(2+). Residue serine 116 is modified to Phosphoserine. Alpha-D-glucose 1,6-bisphosphate contacts are provided by aspartate 292, arginine 293, threonine 357, glutamate 376, serine 378, and lysine 389.

This sequence belongs to the phosphohexose mutase family. Monomer. Mg(2+) serves as cofactor. As to expression, localized primarily to fat bodies in third instar larvae.

The enzyme catalyses alpha-D-glucose 1-phosphate = alpha-D-glucose 6-phosphate. It catalyses the reaction O-phospho-L-seryl-[protein] + alpha-D-glucose 1-phosphate = alpha-D-glucose 1,6-bisphosphate + L-seryl-[protein]. It carries out the reaction alpha-D-glucose 1,6-bisphosphate + L-seryl-[protein] = O-phospho-L-seryl-[protein] + alpha-D-glucose 6-phosphate. Functionally, catalyzes the reversible isomerization of alpha-D-glucose 1-phosphate to alpha-D-glucose 6-phosphate. The mechanism proceeds via the intermediate compound alpha-D-glucose 1,6-bisphosphate. This enzyme participates in both the breakdown and synthesis of glucose. Enzyme of the glycolytic pathway. Glycolysis is essential in glial cells but not in neurons; neurons rely on the citric acid cycle for their energy needs, and on lactate and alanine secreted into the hemolymph by glial cells to fuel it. In Drosophila melanogaster (Fruit fly), this protein is Phosphoglucomutase 1.